Here is a 261-residue protein sequence, read N- to C-terminus: Homeobox protein engrailed-2b (261 aa).

Basic and acidic residues-rich tracts occupy residues 1-21, 53-72, and 100-116; these read MEEN…DESN, GRRK…RENR, and KKTD…RAET. Disordered regions lie at residues 1–24, 53–125, and 152–176; these read MEEN…NRAI, GRRK…SSDS, and DRPS…KRPR. The segment at residues 172–231 is a DNA-binding region (homeobox); the sequence is DKRPRTAFTAEQLQRLKNEFQNNRYLTEQRRQALAQELGLNESQIKIWFQNKRAKIKKAT.

It belongs to the engrailed homeobox family.

The protein localises to the nucleus. The sequence is that of Homeobox protein engrailed-2b (eng2b) from Danio rerio (Zebrafish).